A 503-amino-acid chain; its full sequence is Transforming protein rel polyprotein (503 aa).

In terms of domain architecture, RHD spans 16 to 305 (PYIEIFEQPR…GNKAKRQRST (290 aa)). Ser-275 bears the Phosphoserine; by host PKA mark. Disordered stretches follow at residues 286–306 (RYLP…RSTL) and 318–342 (AVTE…KEPN). A Nuclear localization signal motif is present at residues 298 to 303 (KAKRQR).

Its subcellular location is the host cytoplasm. In terms of biological role, this transforming protein appears to have a protein-kinase activity. In Galliformes, this protein is Transforming protein rel polyprotein (V-REL).